Reading from the N-terminus, the 167-residue chain is Peptide deformylase (167 aa).

Fe cation is bound by residues cysteine 91 and histidine 133. Glutamate 134 is an active-site residue. Histidine 137 provides a ligand contact to Fe cation.

The protein belongs to the polypeptide deformylase family. Fe(2+) is required as a cofactor.

The enzyme catalyses N-terminal N-formyl-L-methionyl-[peptide] + H2O = N-terminal L-methionyl-[peptide] + formate. In terms of biological role, removes the formyl group from the N-terminal Met of newly synthesized proteins. Requires at least a dipeptide for an efficient rate of reaction. N-terminal L-methionine is a prerequisite for activity but the enzyme has broad specificity at other positions. This is Peptide deformylase from Baumannia cicadellinicola subsp. Homalodisca coagulata.